Consider the following 525-residue polypeptide: GMP synthase [glutamine-hydrolyzing] (525 aa).

One can recognise a Glutamine amidotransferase type-1 domain in the interval 13–202 (TILVLDFGSQ…AVEICQAAQT (190 aa)). Cys89 (nucleophile) is an active-site residue. Residues His176 and Glu178 contribute to the active site. In terms of domain architecture, GMPS ATP-PPase spans 203–400 (WTMENFIDTE…LGISHELVWR (198 aa)). Residue 231–237 (SGGVDST) participates in ATP binding. Residues Arg304, Asp462, Lys517, and Glu523 each contribute to the XMP site.

Homodimer. Mg(2+) serves as cofactor.

Its subcellular location is the cytoplasm. The protein localises to the cytosol. It carries out the reaction XMP + L-glutamine + ATP + H2O = GMP + L-glutamate + AMP + diphosphate + 2 H(+). The protein operates within purine metabolism; GMP biosynthesis; GMP from XMP (L-Gln route): step 1/1. In terms of biological role, catalyzes the conversion of xanthine monophosphate (XMP) to GMP in the presence of glutamine and ATP through an adenyl-XMP intermediate. This is GMP synthase [glutamine-hydrolyzing] (GUA1) from Eremothecium gossypii (strain ATCC 10895 / CBS 109.51 / FGSC 9923 / NRRL Y-1056) (Yeast).